The primary structure comprises 427 residues: Glutamate-1-semialdehyde 2,1-aminomutase (427 aa).

K265 is modified (N6-(pyridoxal phosphate)lysine).

It belongs to the class-III pyridoxal-phosphate-dependent aminotransferase family. HemL subfamily. As to quaternary structure, homodimer. It depends on pyridoxal 5'-phosphate as a cofactor.

It localises to the cytoplasm. The catalysed reaction is (S)-4-amino-5-oxopentanoate = 5-aminolevulinate. It functions in the pathway porphyrin-containing compound metabolism; protoporphyrin-IX biosynthesis; 5-aminolevulinate from L-glutamyl-tRNA(Glu): step 2/2. The sequence is that of Glutamate-1-semialdehyde 2,1-aminomutase from Pseudomonas syringae pv. syringae (strain B728a).